Consider the following 425-residue polypeptide: Ribulose bisphosphate carboxylase (425 aa).

Catalysis depends on Lys153, which acts as the Proton acceptor. Lys155 provides a ligand contact to substrate. Positions 179, 181, and 182 each coordinate Mg(2+). Lys179 carries the N6-carboxylysine modification. His269 serves as the catalytic Proton acceptor. Residues Arg270, His302, 353 to 355 (SGG), and 375 to 378 (QAGG) each bind substrate.

Belongs to the RuBisCO large chain family. Type III subfamily. Homodimer. In contrast to form I RuBisCO, the form III RuBisCO is composed solely of large subunits. Requires Mg(2+) as cofactor.

It catalyses the reaction 2 (2R)-3-phosphoglycerate + 2 H(+) = D-ribulose 1,5-bisphosphate + CO2 + H2O. The catalysed reaction is D-ribulose 1,5-bisphosphate + O2 = 2-phosphoglycolate + (2R)-3-phosphoglycerate + 2 H(+). With respect to regulation, reversibly inhibited by O(2). Functionally, catalyzes the addition of molecular CO(2) and H(2)O to ribulose 1,5-bisphosphate (RuBP), generating two molecules of 3-phosphoglycerate (3-PGA). Functions in an archaeal AMP degradation pathway, together with AMP phosphorylase and R15P isomerase. In Methanocaldococcus jannaschii (strain ATCC 43067 / DSM 2661 / JAL-1 / JCM 10045 / NBRC 100440) (Methanococcus jannaschii), this protein is Ribulose bisphosphate carboxylase.